We begin with the raw amino-acid sequence, 787 residues long: ABC transporter G family member 5 (787 aa).

Residues 1–17 (MSRFVDKLPLFDRRPSP) are compositionally biased toward basic and acidic residues. 2 disordered regions span residues 1-25 (MSRF…EGLP) and 71-116 (NDAR…EGQP). Polar residues predominate over residues 74–85 (RSGSSTPISSPR). An ABC transporter domain is found at 121–382 (LKFTDLTYSV…FLDFGKPIPD (262 aa)). 175 to 182 (GASGSGKS) provides a ligand contact to ATP. Positions 484–691 (GVLTRRAFIN…PYEAVMQNEF (208 aa)) constitute an ABC transmembrane type-2 domain. 8 consecutive transmembrane segments (helical) span residues 500–520 (VFII…TIFW), 535–555 (FFAI…PVFL), 576–596 (VLSH…AFAL), 599–619 (FFSV…AIVL), 620–640 (ASFW…THVM), 641–661 (LGFP…GFFI), 728–745 (SLGV…GPDF), and 760–780 (LWIT…SLLL).

It belongs to the ABC transporter superfamily. ABCG family. Eye pigment precursor importer (TC 3.A.1.204) subfamily. Expressed in the crown root primordia, endodermis, pericycle and stele in the root, in leaf primordia of main and axillary shoots, and in the vascular cells and leaf epidermis of older leaves.

It localises to the cell membrane. Functionally, essential transporter for growth and development under abiotic stress. Mediates shoot branching by promoting the outgrowth of lateral shoots. Required for salt tolerance via Na/K homeostasis, at least partly by regulating SKC1/OsHKT1;5. Necessary for hypodermal suberization of roots, which contributes to formation of the apoplastic barrier. The polypeptide is ABC transporter G family member 5 (Oryza sativa subsp. japonica (Rice)).